The following is a 479-amino-acid chain: Chromosomal replication initiator protein DnaA (479 aa).

Residues 1-71 (MNLTQIWKAT…RNALARVVGY (71 aa)) are domain I, interacts with DnaA modulators. The tract at residues 71–138 (YPVQVQVLIA…LDLASAMRSG (68 aa)) is domain II. Over residues 86 to 99 (TEPSPSLTLSNGSR) the composition is skewed to polar residues. The interval 86-106 (TEPSPSLTLSNGSRLMSDPEP) is disordered. The domain III, AAA+ region stretch occupies residues 139–355 (MLNPRYTFSS…GSLNRVAAYA (217 aa)). ATP-binding residues include G183, G185, K186, and T187. A domain IV, binds dsDNA region spans residues 356-479 (ELNRAPITIE…IRERIQMLRG (124 aa)).

The protein belongs to the DnaA family. In terms of assembly, oligomerizes as a right-handed, spiral filament on DNA at oriC.

The protein resides in the cytoplasm. Plays an essential role in the initiation and regulation of chromosomal replication. ATP-DnaA binds to the origin of replication (oriC) to initiate formation of the DNA replication initiation complex once per cell cycle. Binds the DnaA box (a 9 base pair repeat at the origin) and separates the double-stranded (ds)DNA. Forms a right-handed helical filament on oriC DNA; dsDNA binds to the exterior of the filament while single-stranded (ss)DNA is stabiized in the filament's interior. The ATP-DnaA-oriC complex binds and stabilizes one strand of the AT-rich DNA unwinding element (DUE), permitting loading of DNA polymerase. After initiation quickly degrades to an ADP-DnaA complex that is not apt for DNA replication. Binds acidic phospholipids. In Chloroflexus aurantiacus (strain ATCC 29366 / DSM 635 / J-10-fl), this protein is Chromosomal replication initiator protein DnaA.